A 466-amino-acid polypeptide reads, in one-letter code: Soluble pyridine nucleotide transhydrogenase (466 aa).

Position 36 to 45 (36 to 45) interacts with FAD; the sequence is ERYQNVGGGC.

The protein belongs to the class-I pyridine nucleotide-disulfide oxidoreductase family. The cofactor is FAD.

Its subcellular location is the cytoplasm. The catalysed reaction is NAD(+) + NADPH = NADH + NADP(+). Its function is as follows. Conversion of NADPH, generated by peripheral catabolic pathways, to NADH, which can enter the respiratory chain for energy generation. This Shigella boydii serotype 18 (strain CDC 3083-94 / BS512) protein is Soluble pyridine nucleotide transhydrogenase.